A 249-amino-acid polypeptide reads, in one-letter code: 3-deoxy-D-manno-octulosonic acid kinase (249 aa).

D175 is an active-site residue.

The protein belongs to the protein kinase superfamily. KdkA/RfaP family.

It is found in the cell inner membrane. It carries out the reaction an alpha-Kdo-(2-&gt;6)-lipid IVA + ATP = a 4-O-phospho-alpha-Kdo-(2-&gt;6)-lipid IVA + ADP + H(+). The protein operates within bacterial outer membrane biogenesis; LPS core biosynthesis. Catalyzes the ATP-dependent phosphorylation of the 3-deoxy-D-manno-octulosonic acid (Kdo) residue in Kdo-lipid IV(A) at the 4-OH position. The protein is 3-deoxy-D-manno-octulosonic acid kinase of Xanthomonas oryzae pv. oryzae (strain PXO99A).